The sequence spans 360 residues: Peptide chain release factor 1 (360 aa).

Gln-237 is subject to N5-methylglutamine.

It belongs to the prokaryotic/mitochondrial release factor family. Methylated by PrmC. Methylation increases the termination efficiency of RF1.

It is found in the cytoplasm. Its function is as follows. Peptide chain release factor 1 directs the termination of translation in response to the peptide chain termination codons UAG and UAA. In Pseudomonas aeruginosa (strain ATCC 15692 / DSM 22644 / CIP 104116 / JCM 14847 / LMG 12228 / 1C / PRS 101 / PAO1), this protein is Peptide chain release factor 1 (prfA).